The primary structure comprises 671 residues: DNA ligase (671 aa).

Residues Asp-35–Asp-39, Ser-84–Leu-85, and Glu-113 contribute to the NAD(+) site. Lys-115 (N6-AMP-lysine intermediate) is an active-site residue. The NAD(+) site is built by Arg-136, Glu-170, Lys-285, and Lys-309. Residues Cys-403, Cys-406, Cys-421, and Cys-426 each contribute to the Zn(2+) site. The 84-residue stretch at Thr-588–Leu-671 folds into the BRCT domain.

It belongs to the NAD-dependent DNA ligase family. LigA subfamily. Requires Mg(2+) as cofactor. Mn(2+) is required as a cofactor.

It catalyses the reaction NAD(+) + (deoxyribonucleotide)n-3'-hydroxyl + 5'-phospho-(deoxyribonucleotide)m = (deoxyribonucleotide)n+m + AMP + beta-nicotinamide D-nucleotide.. In terms of biological role, DNA ligase that catalyzes the formation of phosphodiester linkages between 5'-phosphoryl and 3'-hydroxyl groups in double-stranded DNA using NAD as a coenzyme and as the energy source for the reaction. It is essential for DNA replication and repair of damaged DNA. In Onion yellows phytoplasma (strain OY-M), this protein is DNA ligase.